Consider the following 276-residue polypeptide: Large ribosomal subunit protein uL2 (276 aa).

The interval 224 to 265 is disordered; it reads GTAMNPIDHPHGGGEGKNFGKHPVSPWGVQTKGKRTRSNKRT.

This sequence belongs to the universal ribosomal protein uL2 family. Part of the 50S ribosomal subunit. Forms a bridge to the 30S subunit in the 70S ribosome.

In terms of biological role, one of the primary rRNA binding proteins. Required for association of the 30S and 50S subunits to form the 70S ribosome, for tRNA binding and peptide bond formation. It has been suggested to have peptidyltransferase activity; this is somewhat controversial. Makes several contacts with the 16S rRNA in the 70S ribosome. The protein is Large ribosomal subunit protein uL2 of Blochmanniella floridana.